Reading from the N-terminus, the 115-residue chain is Large ribosomal subunit protein bL19 (115 aa).

Belongs to the bacterial ribosomal protein bL19 family.

Functionally, this protein is located at the 30S-50S ribosomal subunit interface and may play a role in the structure and function of the aminoacyl-tRNA binding site. In Tolumonas auensis (strain DSM 9187 / NBRC 110442 / TA 4), this protein is Large ribosomal subunit protein bL19.